The following is a 206-amino-acid chain: MFIVIEGGEGSGKSSLAKALGDQLVAQDRKVLLTREPGGCLIGERLRDLILEPPHLELSRCCELFLFLGSRAQHIQEVIIPALRDGYIVICERFHDSTIVYQGIAEGLGADFVADLCSKVVGPTPFLPNFVLLLDIPADIGLQRKHRQKVFDKFEKKPLSYHNRIREGFLSLASADPSRYLVLDARESLASLIDKVMLHTQLGLCT.

Glycine 7–serine 14 serves as a coordination point for ATP.

Belongs to the thymidylate kinase family.

The catalysed reaction is dTMP + ATP = dTDP + ADP. Functionally, phosphorylation of dTMP to form dTDP in both de novo and salvage pathways of dTTP synthesis. The protein is Thymidylate kinase (tmk) of Chlamydia pneumoniae (Chlamydophila pneumoniae).